Consider the following 524-residue polypeptide: Bifunctional purine biosynthesis protein PurH (524 aa).

An MGS-like domain is found at 1–145 (MIKQALLSVS…KNHRDVTVIV (145 aa)).

This sequence belongs to the PurH family.

It catalyses the reaction (6R)-10-formyltetrahydrofolate + 5-amino-1-(5-phospho-beta-D-ribosyl)imidazole-4-carboxamide = 5-formamido-1-(5-phospho-D-ribosyl)imidazole-4-carboxamide + (6S)-5,6,7,8-tetrahydrofolate. The catalysed reaction is IMP + H2O = 5-formamido-1-(5-phospho-D-ribosyl)imidazole-4-carboxamide. It participates in purine metabolism; IMP biosynthesis via de novo pathway; 5-formamido-1-(5-phospho-D-ribosyl)imidazole-4-carboxamide from 5-amino-1-(5-phospho-D-ribosyl)imidazole-4-carboxamide (10-formyl THF route): step 1/1. It functions in the pathway purine metabolism; IMP biosynthesis via de novo pathway; IMP from 5-formamido-1-(5-phospho-D-ribosyl)imidazole-4-carboxamide: step 1/1. The chain is Bifunctional purine biosynthesis protein PurH from Cupriavidus necator (strain ATCC 17699 / DSM 428 / KCTC 22496 / NCIMB 10442 / H16 / Stanier 337) (Ralstonia eutropha).